The primary structure comprises 777 residues: MNSERSERITIPVLPLRDVVIYPHMVIPLFVGRQKSIKCIETSMSNDKKIMLIAQKEASKDEPTPKDLFDIGTISAILQMLKLPDGTVKVLIEGLQRAHIKNLTNNGEHFIAEVELISSSNLLDKNQEVLIRTTMNQFESYIKLNKKIPLEILNVLNNIKNSEKLADTIAAHMPLKLNDKQSVLEIRNINDRLEFLMAIMESEIDLLQVEKRIRHRVKKQMEKSQREYYLNEQIKAIQKELGDMDEIPDENKILKRKIKSSKMPKEAREKTELELQKLKMMSPMSAEATVVRSYIDWMIQVPWYLKTKIKKDLQQAKKILDIDHFGLETVKDRILEYLAVQSRKNKIKGPILCLIGPPGVGKTSLGKSIARSTGRKYVRIALGGIRDEAEIRGHRRTYIGSMPGKLIQKMAKAKVKNPLFLLDEIDKMSRDIRVDPASALLEVLDSEQNMNFNDHYLEVDYDLSDVMFVATSNSMNIPAPLLDRMEIIRLSGYTEDEKLNIAKRYLYPKQIERNGLEENEIKITDSAIISIIHYYTREAGVRSLEREISKICRKAVKNLILDKSLKHIEINSKNLKKFLGIKRFDYGKIHGTNQIGQVIGLAWTEVGGELLTIETTCVSGKGKLTYTGSLGEVMQESIQAALTVVRSQADRLGIKKDFHEKHDIHVHVPEGATPKDGPSAGAAMCTAIVSSLTNNPVKSNVAMTGEITLHGKILPIGGLKEKLLAAHRGGIKTVLIPYENKRNLEEIPKNIIEGLNIHPIKKIEEVLKLSLEKIPYV.

A Lon N-terminal domain is found at 11–204 (IPVLPLRDVV…FLMAIMESEI (194 aa)). ATP is bound at residue 356–363 (GPPGVGKT). The region spanning 592-773 (TNQIGQVIGL…EEVLKLSLEK (182 aa)) is the Lon proteolytic domain. Residues S679 and K722 contribute to the active site.

It belongs to the peptidase S16 family. As to quaternary structure, homohexamer. Organized in a ring with a central cavity.

It localises to the cytoplasm. It catalyses the reaction Hydrolysis of proteins in presence of ATP.. In terms of biological role, ATP-dependent serine protease that mediates the selective degradation of mutant and abnormal proteins as well as certain short-lived regulatory proteins. Required for cellular homeostasis and for survival from DNA damage and developmental changes induced by stress. Degrades polypeptides processively to yield small peptide fragments that are 5 to 10 amino acids long. Binds to DNA in a double-stranded, site-specific manner. The protein is Lon protease of Buchnera aphidicola subsp. Acyrthosiphon pisum (strain APS) (Acyrthosiphon pisum symbiotic bacterium).